A 223-amino-acid polypeptide reads, in one-letter code: Octanoyltransferase (223 aa).

Residues 35–214 (GEARELIWLL…HFPAMLAGLR (180 aa)) enclose the BPL/LPL catalytic domain. Residues 74 to 81 (RGGRYTYH), 145 to 147 (AIG), and 158 to 160 (GFS) each bind substrate. C176 functions as the Acyl-thioester intermediate in the catalytic mechanism.

Belongs to the LipB family.

It localises to the cytoplasm. The catalysed reaction is octanoyl-[ACP] + L-lysyl-[protein] = N(6)-octanoyl-L-lysyl-[protein] + holo-[ACP] + H(+). It participates in protein modification; protein lipoylation via endogenous pathway; protein N(6)-(lipoyl)lysine from octanoyl-[acyl-carrier-protein]: step 1/2. Functionally, catalyzes the transfer of endogenously produced octanoic acid from octanoyl-acyl-carrier-protein onto the lipoyl domains of lipoate-dependent enzymes. Lipoyl-ACP can also act as a substrate although octanoyl-ACP is likely to be the physiological substrate. In Rhizorhabdus wittichii (strain DSM 6014 / CCUG 31198 / JCM 15750 / NBRC 105917 / EY 4224 / RW1) (Sphingomonas wittichii), this protein is Octanoyltransferase.